Consider the following 147-residue polypeptide: Large ribosomal subunit protein bL9 (147 aa).

It belongs to the bacterial ribosomal protein bL9 family.

In terms of biological role, binds to the 23S rRNA. This is Large ribosomal subunit protein bL9 from Campylobacter jejuni subsp. jejuni serotype O:2 (strain ATCC 700819 / NCTC 11168).